The primary structure comprises 344 residues: tRNA N6-adenosine threonylcarbamoyltransferase (344 aa).

Positions 119 and 123 each coordinate Fe cation. Substrate contacts are provided by residues 141–145 (VVSGG), Asp174, Gly187, Asp191, and Asn280. Asp310 contacts Fe cation.

Belongs to the KAE1 / TsaD family. Fe(2+) is required as a cofactor.

The protein resides in the cytoplasm. The catalysed reaction is L-threonylcarbamoyladenylate + adenosine(37) in tRNA = N(6)-L-threonylcarbamoyladenosine(37) in tRNA + AMP + H(+). Its function is as follows. Required for the formation of a threonylcarbamoyl group on adenosine at position 37 (t(6)A37) in tRNAs that read codons beginning with adenine. Is involved in the transfer of the threonylcarbamoyl moiety of threonylcarbamoyl-AMP (TC-AMP) to the N6 group of A37, together with TsaE and TsaB. TsaD likely plays a direct catalytic role in this reaction. This chain is tRNA N6-adenosine threonylcarbamoyltransferase, found in Listeria innocua serovar 6a (strain ATCC BAA-680 / CLIP 11262).